We begin with the raw amino-acid sequence, 641 residues long: YAP1-binding protein 2 (641 aa).

The protein belongs to the YBP1 family.

Its subcellular location is the cytoplasm. Functionally, involved in oxidative stress response and redox homeostasis. Required for hydrogen peroxide-induced activation of YAP1. Acts in a parallele pathway to YBP1. The protein is YAP1-binding protein 2 of Saccharomyces cerevisiae (strain ATCC 204508 / S288c) (Baker's yeast).